The primary structure comprises 473 residues: Probable transporter MCH2 (473 aa).

Over 1-37 (MSEERHEDHHRDVENKLNLNGKDDINGNTSISIEVPD) the chain is Cytoplasmic. Residues 38–58 (GGYGWFILLAFILYNFSTWGA) form a helical membrane-spanning segment. Topologically, residues 59–83 (NSGYAIYLAHYLENNTFAGGSKLDY) are extracellular. The N-linked (GlcNAc...) asparagine glycan is linked to N72. Residues 84-105 (ASIGGLAFSCGLFFAPVITWLY) traverse the membrane as a helical segment. Residues 106–111 (HIFSIQ) are Cytoplasmic-facing. The helical transmembrane segment at 112–135 (FIIGLGILFQGAALLLAAFSVTLW) threads the bilayer. Over 136 to 141 (EIYLTQ) the chain is Extracellular. Residues 142–163 (GVLIGFGLAFIFIPSVTLIPLW) traverse the membrane as a helical segment. The Cytoplasmic portion of the chain corresponds to 164–169 (FRNKRS). Residues 170 to 186 (LASGIGTAGSGLGGIVF) form a helical membrane-spanning segment. Topologically, residues 187–200 (NLGMQSILQKRGVK) are extracellular. The helical transmembrane segment at 201–220 (WALIAQCIICTSLSTIALML) threads the bilayer. Residues 221 to 243 (TRTTHQGLRQHKRSYKFELLDYD) are Cytoplasmic-facing. Residues 244 to 268 (VLSNFAVWLLFGFVSFAMLGYVVLL) form a helical membrane-spanning segment. The Extracellular portion of the chain corresponds to 269-286 (YSLSDFTVSLGYTSKQGS). Residues 287–304 (YVSCMVSVGSLLGRPIVG) form a helical membrane-spanning segment. The Cytoplasmic segment spans residues 305-312 (HIADKYGS). A helical membrane pass occupies residues 313–332 (LTVGMILHLVMAILCWAMWI). The Extracellular segment spans residues 333–342 (PCKNLATAIA). The helical transmembrane segment at 343-362 (FGLLVGSIMGTIWPTIASIV) threads the bilayer. At 363-370 (TRIVGLQK) the chain is on the cytoplasmic side. The chain crosses the membrane as a helical span at residues 371–394 (LPGTFGSTWIFMAAFALVAPIIGL). At 395–408 (ELRSTDTNGNDYYR) the chain is on the extracellular side. The helical transmembrane segment at 409 to 433 (TAIFVGFAYFGVSLCQWLLRGFIIA) threads the bilayer. Residues 434–473 (RDEIAVREAYSADQNELHLNVKLSHMSKCLFRYKQLPRRV) lie on the Cytoplasmic side of the membrane.

This sequence belongs to the major facilitator superfamily. Monocarboxylate porter (TC 2.A.1.13) family.

The protein resides in the membrane. Its function is as follows. Probable transporter. Does not act in the transport of monocarboxylic acids across the plasma membrane. This is Probable transporter MCH2 (MCH2) from Saccharomyces cerevisiae (strain ATCC 204508 / S288c) (Baker's yeast).